Consider the following 440-residue polypeptide: Thymidine phosphorylase (440 aa).

It belongs to the thymidine/pyrimidine-nucleoside phosphorylase family. As to quaternary structure, homodimer.

The catalysed reaction is thymidine + phosphate = 2-deoxy-alpha-D-ribose 1-phosphate + thymine. It functions in the pathway pyrimidine metabolism; dTMP biosynthesis via salvage pathway; dTMP from thymine: step 1/2. In terms of biological role, the enzymes which catalyze the reversible phosphorolysis of pyrimidine nucleosides are involved in the degradation of these compounds and in their utilization as carbon and energy sources, or in the rescue of pyrimidine bases for nucleotide synthesis. The sequence is that of Thymidine phosphorylase from Burkholderia pseudomallei (strain 1106a).